The sequence spans 275 residues: Putative hydroxypyruvate isomerase (275 aa).

Residues Glu147 and Glu246 each act as proton donor/acceptor in the active site.

The protein belongs to the hyi family.

It catalyses the reaction 3-hydroxypyruvate = 2-hydroxy-3-oxopropanoate. Functionally, catalyzes the reversible isomerization between hydroxypyruvate and 2-hydroxy-3-oxopropanoate (also termed tartronate semialdehyde). The protein is Putative hydroxypyruvate isomerase (hyi) of Xenopus laevis (African clawed frog).